The following is a 72-amino-acid chain: MNNPMEEQQSALLGRIISNVEKLNESITRLNHSLQLINMSNMNVELASQMWANYARNVKFHLEETHTLKDPI.

The stretch at 15-35 (RIISNVEKLNESITRLNHSLQ) forms a coiled coil.

This sequence belongs to the DASH complex DAD4 family. In terms of assembly, component of the DASH complex consisting of ask1, dad1, dad2, dad3, dad4, dam1, duo1, dad5, spc19 and spc34, with a stoichiometry of one copy of each subunit per complex. Multiple DASH complexes oligomerize to form a ring that encircles spindle microtubules and organizes the rod-like NDC80 complexes of the outer kinetochore. DASH complex oligomerization strengthens microtubule attachments. On cytoplasmic microtubules, DASH complexes appear to form patches instead of rings.

The protein resides in the nucleus. The protein localises to the cytoplasm. Its subcellular location is the cytoskeleton. It is found in the spindle. It localises to the chromosome. The protein resides in the centromere. The protein localises to the kinetochore. In terms of biological role, component of the DASH complex that connects microtubules with kinetochores and couples microtubule depolymerisation to chromosome movement; it is involved in retrieving kinetochores to the spindle poles before their re-orientation on the spindle in early mitosis and allows microtubule depolymerization to pull chromosomes apart and resist detachment during anaphase. Kinetochores, consisting of a centromere-associated inner segment and a microtubule-contacting outer segment, play a crucial role in chromosome segregation by mediating the physical connection between centromeric DNA and microtubules. Kinetochores also serve as an input point for the spindle assembly checkpoint, which delays anaphase until all chromosomes have bioriented on the mitotic spindle. The DASH complex mediates bipolar kinetochore-microtubule attachments and facilitates the formation of additional interactions between outer kinetochore components and spindle microtubules. During chromosome movement along the microtubule, it is required both for the sliding of kinetochores along the lateral side of the microtubule and also for microtubule end-on pulling on the kinetochore. Modulates cytoplasmic microtubule dynamics by tracking the plus-end of shortening microtubules and slowing their depolymerization. The protein is DASH complex subunit dad4 (dad4) of Schizosaccharomyces pombe (strain 972 / ATCC 24843) (Fission yeast).